Consider the following 320-residue polypeptide: Olfactory receptor 52N1 (320 aa).

Residues 1–27 are Extracellular-facing; sequence MSFLNGTSLTPASFILNGIPGLEDVHL. Residue asparagine 5 is glycosylated (N-linked (GlcNAc...) asparagine). A helical membrane pass occupies residues 28–48; the sequence is WISFPLCTMYSIAITGNFGLM. Residues 49–56 lie on the Cytoplasmic side of the membrane; that stretch reads YLIYCDEA. A helical membrane pass occupies residues 57–77; that stretch reads LHRPMYVFLALLSFTDVLMCT. Residues 78 to 101 are Extracellular-facing; the sequence is STLPNTLFILWFNLKEIDFKACLA. Cysteine 99 and cysteine 191 are disulfide-bonded. Residues 102–122 form a helical membrane-spanning segment; sequence QMFFVHTFTGMESGVLMLMAL. The Cytoplasmic segment spans residues 123–141; sequence DHCVAICFPLRYATILTNS. Residues 142–162 traverse the membrane as a helical segment; it reads VIAKAGFLTFLRGVMLVIPST. At 163 to 198 the chain is on the extracellular side; the sequence is FLTKRLPYCKGNVIPHTYCDHMSVAKISCGNVRVNA. The helical transmembrane segment at 199-219 threads the bilayer; sequence IYGLIVALLIGGFDILCITIS. Over 220–239 the chain is Cytoplasmic; that stretch reads YTMILQAVVSLSSADARQKA. The chain crosses the membrane as a helical span at residues 240 to 260; the sequence is FSTCTAHFCAIVLTYVPAFFT. The Extracellular portion of the chain corresponds to 261 to 276; that stretch reads FFTHHFGGHTIPLHIH. The helical transmembrane segment at 277 to 297 threads the bilayer; the sequence is IIMANLYLLMPPTMNPIVYGV. The Cytoplasmic portion of the chain corresponds to 298-320; sequence KTRQVRESVIRFFLKGKDNSHNF.

It belongs to the G-protein coupled receptor 1 family.

It is found in the cell membrane. Odorant receptor. In Homo sapiens (Human), this protein is Olfactory receptor 52N1 (OR52N1).